The sequence spans 1240 residues: ATP-dependent helicase/nuclease subunit A (1240 aa).

The region spanning 12 to 485 (SQWTDDQWKA…IDLAKNFRSR (474 aa)) is the UvrD-like helicase ATP-binding domain. 33-40 (AAAGSGKT) is an ATP binding site. One can recognise a UvrD-like helicase C-terminal domain in the interval 497–804 (KQIMGEEVGE…RIMTIHKSKG (308 aa)).

This sequence belongs to the helicase family. AddA subfamily. In terms of assembly, heterodimer of AddA and AddB/RexB. Mg(2+) is required as a cofactor.

It catalyses the reaction Couples ATP hydrolysis with the unwinding of duplex DNA by translocating in the 3'-5' direction.. The enzyme catalyses ATP + H2O = ADP + phosphate + H(+). Functionally, the heterodimer acts as both an ATP-dependent DNA helicase and an ATP-dependent, dual-direction single-stranded exonuclease. Recognizes the chi site generating a DNA molecule suitable for the initiation of homologous recombination. The AddA nuclease domain is required for chi fragment generation; this subunit has the helicase and 3' -&gt; 5' nuclease activities. The polypeptide is ATP-dependent helicase/nuclease subunit A (Bacillus cereus (strain AH820)).